The sequence spans 282 residues: B3 domain-containing protein At5g25475 (282 aa).

The TF-B3 DNA-binding region spans 20–114 (WKSLSPGQTW…NLEVQIFKNN (95 aa)). The disordered stretch occupies residues 127–178 (PETEPFHPTPKKPHKETTPASSFASGSGCSANGGTNGRGKQRSSDVKNPERY). Residues 144-159 (TPASSFASGSGCSANG) show a composition bias toward low complexity.

The protein localises to the nucleus. This chain is B3 domain-containing protein At5g25475, found in Arabidopsis thaliana (Mouse-ear cress).